The sequence spans 183 residues: Small ribosomal subunit protein bS16 (183 aa).

Positions 149-161 (EKKAAEAAAKAEA) are enriched in basic and acidic residues. The interval 149–183 (EKKAAEAAAKAEAEAANAPAEEAPAAEATEAPAEA) is disordered. Low complexity predominate over residues 162-183 (EAANAPAEEAPAAEATEAPAEA).

Belongs to the bacterial ribosomal protein bS16 family.

This Phocaeicola vulgatus (strain ATCC 8482 / DSM 1447 / JCM 5826 / CCUG 4940 / NBRC 14291 / NCTC 11154) (Bacteroides vulgatus) protein is Small ribosomal subunit protein bS16.